A 526-amino-acid polypeptide reads, in one-letter code: 3',5'-cyclic-nucleotide phosphodiesterase 2 (526 aa).

A PDEase domain is found at 182 to 526 (RNIEFMSFLS…EYWMKHKKPQ (345 aa)). The active-site Proton donor is the histidine 265. A divalent metal cation-binding residues include histidine 269, histidine 302, aspartate 303, and aspartate 400.

The protein belongs to the cyclic nucleotide phosphodiesterase family. Monomer. It depends on a divalent metal cation as a cofactor.

It catalyses the reaction 3',5'-cyclic AMP + H2O = AMP + H(+). Functionally, controls the level of cAMP in yeast cells, together with the low-affinity cAMP phosphodiesterase (PDE1). This is 3',5'-cyclic-nucleotide phosphodiesterase 2 from Saccharomyces cerevisiae (strain ATCC 204508 / S288c) (Baker's yeast).